We begin with the raw amino-acid sequence, 138 residues long: Phosphoribosyl-AMP cyclohydrolase (138 aa).

Mg(2+) is bound at residue aspartate 92. Cysteine 93 provides a ligand contact to Zn(2+). Mg(2+)-binding residues include aspartate 94 and aspartate 96. 2 residues coordinate Zn(2+): cysteine 109 and cysteine 116.

This sequence belongs to the PRA-CH family. As to quaternary structure, homodimer. It depends on Mg(2+) as a cofactor. The cofactor is Zn(2+).

It is found in the cytoplasm. The enzyme catalyses 1-(5-phospho-beta-D-ribosyl)-5'-AMP + H2O = 1-(5-phospho-beta-D-ribosyl)-5-[(5-phospho-beta-D-ribosylamino)methylideneamino]imidazole-4-carboxamide. Its pathway is amino-acid biosynthesis; L-histidine biosynthesis; L-histidine from 5-phospho-alpha-D-ribose 1-diphosphate: step 3/9. Functionally, catalyzes the hydrolysis of the adenine ring of phosphoribosyl-AMP. In Clavibacter sepedonicus (Clavibacter michiganensis subsp. sepedonicus), this protein is Phosphoribosyl-AMP cyclohydrolase.